The primary structure comprises 544 residues: CTP synthase (544 aa).

The segment at 1 to 266 (MTRFVFITGG…DREVLRHFNL (266 aa)) is amidoligase domain. Ser13 contributes to the CTP binding site. Residue Ser13 coordinates UTP. Position 14 to 19 (14 to 19 (SLGKGI)) interacts with ATP. Tyr54 is a binding site for L-glutamine. Residue Asp71 coordinates ATP. Mg(2+)-binding residues include Asp71 and Glu140. CTP is bound by residues 147-149 (DIE), 187-192 (KTKPTQ), and Lys223. Residues 187 to 192 (KTKPTQ) and Lys223 each bind UTP. The Glutamine amidotransferase type-1 domain maps to 292–543 (KIAIVGKYIT…VAAAVRQARL (252 aa)). Gly354 lines the L-glutamine pocket. Catalysis depends on Cys381, which acts as the Nucleophile; for glutamine hydrolysis. Residues 382–385 (FGMQ), Glu405, and Arg471 each bind L-glutamine. Active-site residues include His516 and Glu518.

Belongs to the CTP synthase family. As to quaternary structure, homotetramer.

The catalysed reaction is UTP + L-glutamine + ATP + H2O = CTP + L-glutamate + ADP + phosphate + 2 H(+). It catalyses the reaction L-glutamine + H2O = L-glutamate + NH4(+). The enzyme catalyses UTP + NH4(+) + ATP = CTP + ADP + phosphate + 2 H(+). It participates in pyrimidine metabolism; CTP biosynthesis via de novo pathway; CTP from UDP: step 2/2. With respect to regulation, allosterically activated by GTP, when glutamine is the substrate; GTP has no effect on the reaction when ammonia is the substrate. The allosteric effector GTP functions by stabilizing the protein conformation that binds the tetrahedral intermediate(s) formed during glutamine hydrolysis. Inhibited by the product CTP, via allosteric rather than competitive inhibition. In terms of biological role, catalyzes the ATP-dependent amination of UTP to CTP with either L-glutamine or ammonia as the source of nitrogen. Regulates intracellular CTP levels through interactions with the four ribonucleotide triphosphates. This chain is CTP synthase, found in Granulibacter bethesdensis (strain ATCC BAA-1260 / CGDNIH1).